A 348-amino-acid polypeptide reads, in one-letter code: Anthranilate phosphoribosyltransferase (348 aa).

5-phospho-alpha-D-ribose 1-diphosphate-binding positions include glycine 80, 83–84 (GD), threonine 88, 90–93 (NVST), 108–116 (KHGNRSVSS), and serine 120. Glycine 80 provides a ligand contact to anthranilate. Mg(2+) is bound at residue serine 92. Asparagine 111 provides a ligand contact to anthranilate. Arginine 166 is a binding site for anthranilate. Aspartate 224 and glutamate 225 together coordinate Mg(2+).

This sequence belongs to the anthranilate phosphoribosyltransferase family. Homodimer. The cofactor is Mg(2+).

It catalyses the reaction N-(5-phospho-beta-D-ribosyl)anthranilate + diphosphate = 5-phospho-alpha-D-ribose 1-diphosphate + anthranilate. Its pathway is amino-acid biosynthesis; L-tryptophan biosynthesis; L-tryptophan from chorismate: step 2/5. In terms of biological role, catalyzes the transfer of the phosphoribosyl group of 5-phosphorylribose-1-pyrophosphate (PRPP) to anthranilate to yield N-(5'-phosphoribosyl)-anthranilate (PRA). In Sorangium cellulosum (strain So ce56) (Polyangium cellulosum (strain So ce56)), this protein is Anthranilate phosphoribosyltransferase.